Consider the following 501-residue polypeptide: Probable leucine aminopeptidase 2 (501 aa).

The signal sequence occupies residues 1–18 (MVTMKLLYLTSFASLAVA). In terms of domain architecture, PA spans 119-216 (SPSVNATAPL…ADGQALIQMI (98 aa)). Residues Asn-123 and Asn-233 are each glycosylated (N-linked (GlcNAc...) asparagine). Zn(2+)-binding residues include His-257 and Asp-269. Glu-301 functions as the Proton acceptor in the catalytic mechanism. A Zn(2+)-binding site is contributed by Glu-302. Asn-316 is a glycosylation site (N-linked (GlcNAc...) asparagine). Residue Asp-330 participates in Zn(2+) binding. Residue Asn-350 is glycosylated (N-linked (GlcNAc...) asparagine). Zn(2+) is bound at residue His-428. N-linked (GlcNAc...) asparagine glycosylation is found at Asn-433 and Asn-467. Residues 480 to 501 (AMKRTPHTHTGGTGCYKDRVEQ) are disordered.

It belongs to the peptidase M28 family. M28A subfamily. As to quaternary structure, monomer. It depends on Zn(2+) as a cofactor.

The protein resides in the secreted. Extracellular aminopeptidase that releases a wide variety of amino acids from natural peptides and contributes to pathogenicity. This Aspergillus fumigatus (strain ATCC MYA-4609 / CBS 101355 / FGSC A1100 / Af293) (Neosartorya fumigata) protein is Probable leucine aminopeptidase 2 (lap2).